The sequence spans 500 residues: Apolipoprotein N-acyltransferase (500 aa).

6 helical membrane passes run 5–25 (VAPF…WIFV), 38–58 (LLLL…FWIT), 74–94 (LAIT…FGAI), 111–131 (ILIG…GPLW), 145–165 (AILH…IVSV), and 185–205 (LAIA…LYTA). Residues 215–462 (LKVGIVQGNI…ETIYRRQTQN (248 aa)) enclose the CN hydrolase domain. E261 serves as the catalytic Proton acceptor. The active site involves K318. Catalysis depends on C369, which acts as the Nucleophile. The helical transmembrane segment at 469-489 (DWFTPLLVGLSFLGWSLNIFW) threads the bilayer.

This sequence belongs to the CN hydrolase family. Apolipoprotein N-acyltransferase subfamily.

The protein localises to the cell inner membrane. It carries out the reaction N-terminal S-1,2-diacyl-sn-glyceryl-L-cysteinyl-[lipoprotein] + a glycerophospholipid = N-acyl-S-1,2-diacyl-sn-glyceryl-L-cysteinyl-[lipoprotein] + a 2-acyl-sn-glycero-3-phospholipid + H(+). It functions in the pathway protein modification; lipoprotein biosynthesis (N-acyl transfer). In terms of biological role, catalyzes the phospholipid dependent N-acylation of the N-terminal cysteine of apolipoprotein, the last step in lipoprotein maturation. This chain is Apolipoprotein N-acyltransferase, found in Nostoc sp. (strain PCC 7120 / SAG 25.82 / UTEX 2576).